The chain runs to 118 residues: Actin depolymerizing factor ADF (118 aa).

One can recognise an ADF-H domain in the interval 4–118; sequence GMGVDENCVA…HEMGDLAPLA (115 aa).

The protein belongs to the actin-binding proteins ADF family. Interacts with ACT1 (G-actin); the interaction results in inhibition of actin polymerization. Interacts with DPA; the interaction enhances ADF activity in disassembly of filamentous actin and inhibition of actin polymerization.

Its subcellular location is the cytoplasm. In terms of biological role, inhibits actin polymerization. Promotes actin depolymerization. Strongly sequesters actin monomers (G-actin). Weakly severs actin filaments (F-actin). This Toxoplasma gondii protein is Actin depolymerizing factor ADF.